Here is a 232-residue protein sequence, read N- to C-terminus: NAD(P)H-quinone oxidoreductase subunit K 1 (232 aa).

[4Fe-4S] cluster is bound by residues cysteine 49, cysteine 50, cysteine 114, and cysteine 145.

The protein belongs to the complex I 20 kDa subunit family. In terms of assembly, NDH-1 can be composed of about 15 different subunits; different subcomplexes with different compositions have been identified which probably have different functions. Requires [4Fe-4S] cluster as cofactor.

It localises to the cell inner membrane. It catalyses the reaction a plastoquinone + NADH + (n+1) H(+)(in) = a plastoquinol + NAD(+) + n H(+)(out). The enzyme catalyses a plastoquinone + NADPH + (n+1) H(+)(in) = a plastoquinol + NADP(+) + n H(+)(out). Its function is as follows. NDH-1 shuttles electrons from an unknown electron donor, via FMN and iron-sulfur (Fe-S) centers, to quinones in the respiratory and/or the photosynthetic chain. The immediate electron acceptor for the enzyme in this species is believed to be plastoquinone. Couples the redox reaction to proton translocation, and thus conserves the redox energy in a proton gradient. Cyanobacterial NDH-1 also plays a role in inorganic carbon-concentration. In Gloeobacter violaceus (strain ATCC 29082 / PCC 7421), this protein is NAD(P)H-quinone oxidoreductase subunit K 1.